The primary structure comprises 501 residues: Suppressor of hairless protein homolog (501 aa).

DNA-binding regions lie at residues glutamine 58 to phenylalanine 68, serine 166 to lysine 171, and arginine 193 to threonine 198. Positions proline 356–threonine 446 constitute an IPT/TIG domain.

Belongs to the Su(H) family. In terms of assembly, interacts with activated Notch proteins. Forms a ternary complex with nrarp and the intracellular domain (NICD) of notch1. Interacts with rita1, leading to nuclear export, prevent the interaction between rbpj and NICD product and subsequent down-regulation of the Notch signaling pathway.

It is found in the nucleus. The protein localises to the cytoplasm. Functionally, transcriptional regulator that plays a central role in Notch signaling, a signaling pathway involved in cell-cell communication that regulates a broad spectrum of cell-fate determinations. Acts as a transcriptional repressor when it is not associated with Notch proteins. When associated with some NICD product of Notch proteins (Notch intracellular domain), it acts as a transcriptional activator that activates transcription of Notch target genes. Required for the transcriptional activation of ESR1, suggesting that it is required during primary neurogenesis in embryos. Binds to the oxygen responsive element of COX4I2 and activates its transcription under hypoxia conditions (4% oxygen). This Xenopus laevis (African clawed frog) protein is Suppressor of hairless protein homolog (rbpj).